The following is a 438-amino-acid chain: UDP-N-acetylglucosamine 1-carboxyvinyltransferase 1 (438 aa).

Phosphoenolpyruvate is bound at residue 22–23 (KN). UDP-N-acetyl-alpha-D-glucosamine is bound at residue Arg95. Cys119 (proton donor) is an active-site residue. Cys119 bears the 2-(S-cysteinyl)pyruvic acid O-phosphothioketal mark. Residues 124–128 (RPIDL), Asp307, and Val329 contribute to the UDP-N-acetyl-alpha-D-glucosamine site.

The protein belongs to the EPSP synthase family. MurA subfamily.

It is found in the cytoplasm. The enzyme catalyses phosphoenolpyruvate + UDP-N-acetyl-alpha-D-glucosamine = UDP-N-acetyl-3-O-(1-carboxyvinyl)-alpha-D-glucosamine + phosphate. It functions in the pathway cell wall biogenesis; peptidoglycan biosynthesis. Functionally, cell wall formation. Adds enolpyruvyl to UDP-N-acetylglucosamine. This is UDP-N-acetylglucosamine 1-carboxyvinyltransferase 1 from Lactiplantibacillus plantarum (strain ATCC BAA-793 / NCIMB 8826 / WCFS1) (Lactobacillus plantarum).